The chain runs to 419 residues: UDP-N-acetylglucosamine 1-carboxyvinyltransferase (419 aa).

22 to 23 (KN) lines the phosphoenolpyruvate pocket. Arg91 serves as a coordination point for UDP-N-acetyl-alpha-D-glucosamine. Cys115 serves as the catalytic Proton donor. At Cys115 the chain carries 2-(S-cysteinyl)pyruvic acid O-phosphothioketal. UDP-N-acetyl-alpha-D-glucosamine contacts are provided by residues 120–124 (RPVDL), 160–163 (KVSV), Asp305, and Val327.

Belongs to the EPSP synthase family. MurA subfamily.

It localises to the cytoplasm. It catalyses the reaction phosphoenolpyruvate + UDP-N-acetyl-alpha-D-glucosamine = UDP-N-acetyl-3-O-(1-carboxyvinyl)-alpha-D-glucosamine + phosphate. It participates in cell wall biogenesis; peptidoglycan biosynthesis. In terms of biological role, cell wall formation. Adds enolpyruvyl to UDP-N-acetylglucosamine. The polypeptide is UDP-N-acetylglucosamine 1-carboxyvinyltransferase (Escherichia coli O157:H7).